The chain runs to 512 residues: tRNA-2-methylthio-N(6)-dimethylallyladenosine synthase (512 aa).

Positions 17 to 133 constitute an MTTase N-terminal domain; that stretch reads RTYEVRTFGC…LPTLLERSAH (117 aa). Residues Cys-26, Cys-62, Cys-96, Cys-170, Cys-174, and Cys-177 each coordinate [4Fe-4S] cluster. The Radical SAM core domain maps to 156-392; sequence RESAYAGWVS…LALQERISEE (237 aa). The region spanning 395–461 is the TRAM domain; that stretch reads RKLIGTTQEL…PHFLIADGGV (67 aa). A disordered region spans residues 473–512; sequence TELGETPTTAPVGVGLGMPSIKKPEPTTAGGCSTGGCGCE.

It belongs to the methylthiotransferase family. MiaB subfamily. Monomer. It depends on [4Fe-4S] cluster as a cofactor.

Its subcellular location is the cytoplasm. It catalyses the reaction N(6)-dimethylallyladenosine(37) in tRNA + (sulfur carrier)-SH + AH2 + 2 S-adenosyl-L-methionine = 2-methylsulfanyl-N(6)-dimethylallyladenosine(37) in tRNA + (sulfur carrier)-H + 5'-deoxyadenosine + L-methionine + A + S-adenosyl-L-homocysteine + 2 H(+). Functionally, catalyzes the methylthiolation of N6-(dimethylallyl)adenosine (i(6)A), leading to the formation of 2-methylthio-N6-(dimethylallyl)adenosine (ms(2)i(6)A) at position 37 in tRNAs that read codons beginning with uridine. In Corynebacterium jeikeium (strain K411), this protein is tRNA-2-methylthio-N(6)-dimethylallyladenosine synthase.